Reading from the N-terminus, the 790-residue chain is Kinesin-like protein KIN-14D (790 aa).

2 disordered regions span residues 1-56 (MPLR…DVGS) and 116-139 (DKEN…LDAK). The tract at residues 1–66 (MPLRNQNRAP…TEECGKVEFT (66 aa)) is globular. Basic and acidic residues predominate over residues 16 to 33 (VKKEALSSIPFDKRRKET). Polar residues predominate over residues 34–55 (QGTGRRQVLSTVNRQDANSDVG). Coiled coils occupy residues 117–316 (KENL…HVVQ) and 347–426 (SLEE…LELK). A compositionally biased stretch (basic and acidic residues) spans 127–139 (AEKRYSDKELDAK). A Kinesin motor domain is found at 428–769 (NIRVFCRVRP…LRFAARVNAC (342 aa)). ATP is bound at residue 513–520 (GQTGSGKT).

The protein belongs to the TRAFAC class myosin-kinesin ATPase superfamily. Kinesin family. KIN-14 subfamily. Slightly expressed in anther lobes with pollen mother cells at anther stage 5. Strongly expressed at anther stage 6 in the tapetum and meiotic cells. Also detected in the gynoecium and the ovule.

It is found in the cytoplasm. The protein localises to the cytoskeleton. Its subcellular location is the phragmoplast. Its function is as follows. Kinesin that supports microtubule movement in an ATP-dependent manner and that functions as a minus-end directed motor as well as a plus-end tracking protein. During mitosis, is involved in early spindle assembly. Participates in the capture of antiparallel interpolar microtubules and helps in generating force to coalign microtubules. The chain is Kinesin-like protein KIN-14D from Arabidopsis thaliana (Mouse-ear cress).